A 249-amino-acid polypeptide reads, in one-letter code: Transcription factor MYB90 (249 aa).

2 HTH myb-type domains span residues 5 to 57 and 58 to 112; these read SKGL…LNYL and KPSI…SKKH. 2 DNA-binding regions (H-T-H motif) span residues 33–57 and 85–108; these read WHQV…LNYL and WSLI…NTHL.

As to quaternary structure, interacts with BHLH12/MYC1, BHLH1/GL3/MYC6, BHLH2/EGL3/MYC146, and BHLH42/TT8. As to expression, expressed only in leaves and siliques.

The protein resides in the nucleus. Its function is as follows. Transcription activator, when associated with BHLH12/MYC1, EGL3, or GL3. Promotes the synthesis of phenylpropanoid-derived compounds such as anthocyanins. This chain is Transcription factor MYB90 (MYB90), found in Arabidopsis thaliana (Mouse-ear cress).